Reading from the N-terminus, the 279-residue chain is RxLR effector protein Avh331 (279 aa).

An N-terminal signal peptide occupies residues 1–20 (MMQWSAILIRTCFSGSGGEA). Residues 86–106 (RSLRSQATNVDDDANVSIENR) carry the RxLR-dEER motif. N-linked (GlcNAc...) asparagine glycosylation is present at asparagine 100. The interval 129 to 147 (ANKLWLMADVDPKSAFKLL) is W1 motif. Residues 153 to 174 (GVRFIDNPKMLQWLKFTKAYLD) form a Y1 motif region. The tract at residues 178-208 (SGFGETSAHALLYEKIGGPDLSLLLLSLKDA) is l motif. The interval 222-240 (QFGMWHDARIEPEQLAQTV) is W2 motif. Residues 250 to 271 (PKNDPKLQVIDDYAKYHRKHRK) form a Y2 motif region.

The protein belongs to the RxLR effector family.

Its subcellular location is the secreted. It is found in the host cell. Effector that suppresses the host mitogen-activated protein kinase (MAPK)-based plant defense activated by the Phytophthora elicitor to promote colonization of the Phytophthora pathogen. Neither directly inhibits MAPK kinase activity nor interacts with MAPK proteins but acts downstream by suppressing transcriptional activation of resistance marker genes such as FRK1, WRKY22 and WRKY29. Confers avirulence in the presence of resistance protein Rps1k in host. In Phytophthora sojae (strain P6497) (Soybean stem and root rot agent), this protein is RxLR effector protein Avh331.